Consider the following 334-residue polypeptide: Methionine adenosyltransferase 2 subunit beta (334 aa).

Residues 37–40, 60–62, 71–72, C93, R97, Y159, and L185 each bind NADP(+); these read TGLL, FRR, and NL. Residue T309 is modified to Phosphothreonine. The interval 319–334 is required for interaction with MAT2A; the sequence is LWPFLIDKRWRQTVFH.

Belongs to the dTDP-4-dehydrorhamnose reductase family. MAT2B subfamily. As to quaternary structure, heterotrimer; composed of a catalytic MAT2A homodimer that binds one regulatory MAT2B chain. Heterohexamer; composed of a central, catalytic MAT2A homotetramer flanked on either side by a regulatory MAT2B chain. NADP binding increases the affinity for MAT2A.

The protein operates within amino-acid biosynthesis; S-adenosyl-L-methionine biosynthesis; S-adenosyl-L-methionine from L-methionine: step 1/1. Regulatory subunit of S-adenosylmethionine synthetase 2, an enzyme that catalyzes the formation of S-adenosylmethionine from methionine and ATP. Regulates MAT2A catalytic activity by changing its kinetic properties, increasing its affinity for L-methionine. Can bind NADP (in vitro). In Pongo abelii (Sumatran orangutan), this protein is Methionine adenosyltransferase 2 subunit beta (MAT2B).